The sequence spans 303 residues: MTKEEMQMAMVQPKSQRLRLLGTHFLMLCFIALIMFPLLMVIAISLRPGNFATGSLIPDQISWEHWKLALGMSVTHADGSVTPPPFPVMLWLWNSIKIALITAMGIVALSTTCAYAFARMRFRGKSALLKGMLIFQMFPAVLSLVALYALFDRIGQYMPFIGLNTHGGVIFAYMGGIALHVWTIKGYFETIDNSLEEAAALDGATPWQAFRLVLLPLSVPILAVVFILSFIAAITEVPVASLLLRDVNSYTLAVGMQQYLNPQNYLWGDFAAAAVLSAIPITTVFLLAQRWLVGGLTAGGVKG.

At 1-19 the chain is on the cytoplasmic side; sequence MTKEEMQMAMVQPKSQRLR. A helical transmembrane segment spans residues 20–42; the sequence is LLGTHFLMLCFIALIMFPLLMVI. Residues 43 to 95 are Periplasmic-facing; that stretch reads AISLRPGNFATGSLIPDQISWEHWKLALGMSVTHADGSVTPPPFPVMLWLWNS. The 197-residue stretch at 92–288 folds into the ABC transmembrane type-1 domain; it reads LWNSIKIALI…IPITTVFLLA (197 aa). A helical transmembrane segment spans residues 96 to 118; it reads IKIALITAMGIVALSTTCAYAFA. The Cytoplasmic segment spans residues 119-130; it reads RMRFRGKSALLK. The helical transmembrane segment at 131–150 threads the bilayer; the sequence is GMLIFQMFPAVLSLVALYAL. The Periplasmic segment spans residues 151–159; it reads FDRIGQYMP. A helical transmembrane segment spans residues 160 to 182; that stretch reads FIGLNTHGGVIFAYMGGIALHVW. Over 183-211 the chain is Cytoplasmic; the sequence is TIKGYFETIDNSLEEAAALDGATPWQAFR. The chain crosses the membrane as a helical span at residues 212–234; it reads LVLLPLSVPILAVVFILSFIAAI. Topologically, residues 235–265 are periplasmic; it reads TEVPVASLLLRDVNSYTLAVGMQQYLNPQNY. The helical transmembrane segment at 266–288 threads the bilayer; it reads LWGDFAAAAVLSAIPITTVFLLA. Topologically, residues 289–303 are cytoplasmic; the sequence is QRWLVGGLTAGGVKG.

The protein belongs to the binding-protein-dependent transport system permease family. MalFG subfamily. As to quaternary structure, the complex is composed of two ATP-binding proteins (MalK), two transmembrane proteins (MalG and MalF) and a solute-binding protein (MalE).

The protein resides in the cell inner membrane. Its function is as follows. Part of the ABC transporter complex MalEFGK involved in maltose/maltodextrin import. Probably responsible for the translocation of the substrate across the membrane. The sequence is that of Maltose/maltodextrin transport system permease protein MalG (malG) from Yersinia pestis.